Consider the following 186-residue polypeptide: Peptidyl-tRNA hydrolase (186 aa).

Y13 contributes to the tRNA binding site. H18 serves as the catalytic Proton acceptor. Residues Y59, N61, and N107 each coordinate tRNA.

Belongs to the PTH family. Monomer.

The protein localises to the cytoplasm. The enzyme catalyses an N-acyl-L-alpha-aminoacyl-tRNA + H2O = an N-acyl-L-amino acid + a tRNA + H(+). Hydrolyzes ribosome-free peptidyl-tRNAs (with 1 or more amino acids incorporated), which drop off the ribosome during protein synthesis, or as a result of ribosome stalling. Its function is as follows. Catalyzes the release of premature peptidyl moieties from peptidyl-tRNA molecules trapped in stalled 50S ribosomal subunits, and thus maintains levels of free tRNAs and 50S ribosomes. The chain is Peptidyl-tRNA hydrolase from Thermotoga maritima (strain ATCC 43589 / DSM 3109 / JCM 10099 / NBRC 100826 / MSB8).